The sequence spans 349 residues: Acyl-CoA Delta(11) desaturase (349 aa).

The next 2 helical transmembrane spans lie at 41–61 and 66–86; these read FLTFSYAHLAALYGLYLCFTS and TLLFSFVLFHMSNIGITAGAH. The Histidine box-1 motif lies at 86 to 91; the sequence is HRLWTH. The short motif at 123 to 127 is the Histidine box-2 element; the sequence is HRLHH. The helical transmembrane segment at 184 to 204 threads the bilayer; that stretch reads AVPLIGTVCFALPTLIPVYCW. Positions 263 to 267 match the Histidine box-3 motif; that stretch reads HNYHH. A helical transmembrane segment spans residues 282–302; that stretch reads FLNLTTLFIDFCAWFGWAYDL.

This sequence belongs to the fatty acid desaturase type 1 family. It depends on Fe cation as a cofactor. Adult female pheromone gland. Increases by two or three orders of magnitude during the first 2 days after adult eclosion.

It is found in the endoplasmic reticulum membrane. The enzyme catalyses an 11,12-saturated fatty acyl-CoA + 2 Fe(II)-[cytochrome b5] + O2 + 2 H(+) = an (11Z)-Delta(11)-fatty acyl-CoA + 2 Fe(III)-[cytochrome b5] + 2 H2O. In terms of biological role, catalyzes the formation of Delta(11) fatty acyl precursors in the pheromone gland. This is Acyl-CoA Delta(11) desaturase (D11DS) from Trichoplusia ni (Cabbage looper).